Here is a 141-residue protein sequence, read N- to C-terminus: Inclusion membrane protein D (141 aa).

Transmembrane regions (helical) follow at residues 38–58 (VAVA…GLLF) and 68–88 (VLAA…ALVG).

The protein resides in the secreted. It localises to the host vacuole. It is found in the host pathogen-containing vacuole. The protein localises to the host pathogen-containing vacuole membrane. In terms of biological role, inclusion membrane protein probably involved in early modification events of the chlamydial inclusion. The polypeptide is Inclusion membrane protein D (incD) (Chlamydia trachomatis serovar D (strain ATCC VR-885 / DSM 19411 / UW-3/Cx)).